The sequence spans 542 residues: Chaperonin GroEL 2 (542 aa).

ATP contacts are provided by residues 30-33 (TLGP), K51, 87-91 (DGTTT), G415, and D496.

This sequence belongs to the chaperonin (HSP60) family. As to quaternary structure, forms a cylinder of 14 subunits composed of two heptameric rings stacked back-to-back. Interacts with the co-chaperonin GroES.

The protein localises to the cytoplasm. It carries out the reaction ATP + H2O + a folded polypeptide = ADP + phosphate + an unfolded polypeptide.. Its function is as follows. Together with its co-chaperonin GroES, plays an essential role in assisting protein folding. The GroEL-GroES system forms a nano-cage that allows encapsulation of the non-native substrate proteins and provides a physical environment optimized to promote and accelerate protein folding. This Sinorhizobium fredii (strain NBRC 101917 / NGR234) protein is Chaperonin GroEL 2.